A 136-amino-acid chain; its full sequence is Aspartate 1-decarboxylase (136 aa).

The active-site Schiff-base intermediate with substrate; via pyruvic acid is serine 25. Position 25 is a pyruvic acid (Ser) (serine 25). Threonine 57 is a binding site for substrate. Residue tyrosine 58 is the Proton donor of the active site. Position 73–75 (glycine 73–alanine 75) interacts with substrate.

Belongs to the PanD family. As to quaternary structure, heterooctamer of four alpha and four beta subunits. Requires pyruvate as cofactor. Is synthesized initially as an inactive proenzyme, which is activated by self-cleavage at a specific serine bond to produce a beta-subunit with a hydroxyl group at its C-terminus and an alpha-subunit with a pyruvoyl group at its N-terminus.

It localises to the cytoplasm. The enzyme catalyses L-aspartate + H(+) = beta-alanine + CO2. It functions in the pathway cofactor biosynthesis; (R)-pantothenate biosynthesis; beta-alanine from L-aspartate: step 1/1. In terms of biological role, catalyzes the pyruvoyl-dependent decarboxylation of aspartate to produce beta-alanine. This Corynebacterium efficiens (strain DSM 44549 / YS-314 / AJ 12310 / JCM 11189 / NBRC 100395) protein is Aspartate 1-decarboxylase.